A 37-amino-acid polypeptide reads, in one-letter code: Large ribosomal subunit protein bL36c (37 aa).

It belongs to the bacterial ribosomal protein bL36 family.

It is found in the plastid. Its subcellular location is the chloroplast. This chain is Large ribosomal subunit protein bL36c, found in Vitis vinifera (Grape).